A 191-amino-acid chain; its full sequence is NAD(P)H-dependent FMN reductase LOT6 (191 aa).

FMN contacts are provided by residues arginine 11, 94-97, and tyrosine 124; that span reads QYNW.

As to quaternary structure, homodimer.

The protein localises to the cytoplasm. It localises to the nucleus. The catalysed reaction is FMNH2 + NADP(+) = FMN + NADPH + 2 H(+). It catalyses the reaction FMNH2 + NAD(+) = FMN + NADH + 2 H(+). Its function is as follows. Has several reductase activities that are NAD(P)H-dependent and involve FMN as a cofactor, ferricyanide being the best substrate for reduction. May be involved in ferric iron assimilation. In Saccharomyces cerevisiae (strain ATCC 204508 / S288c) (Baker's yeast), this protein is NAD(P)H-dependent FMN reductase LOT6 (LOT6).